We begin with the raw amino-acid sequence, 241 residues long: Demethylmenaquinone methyltransferase (241 aa).

2 residues coordinate S-adenosyl-L-methionine: Thr-73 and Asp-92.

This sequence belongs to the class I-like SAM-binding methyltransferase superfamily. MenG/UbiE family.

It carries out the reaction a 2-demethylmenaquinol + S-adenosyl-L-methionine = a menaquinol + S-adenosyl-L-homocysteine + H(+). It functions in the pathway quinol/quinone metabolism; menaquinone biosynthesis; menaquinol from 1,4-dihydroxy-2-naphthoate: step 2/2. Its function is as follows. Methyltransferase required for the conversion of demethylmenaquinol (DMKH2) to menaquinol (MKH2). The polypeptide is Demethylmenaquinone methyltransferase (Chlorobaculum parvum (strain DSM 263 / NCIMB 8327) (Chlorobium vibrioforme subsp. thiosulfatophilum)).